We begin with the raw amino-acid sequence, 367 residues long: Queuine tRNA-ribosyltransferase (367 aa).

The active-site Proton acceptor is the Asp92. Substrate is bound by residues 92–96, Asp146, Gln188, and Gly215; that span reads DSGGF. Residues 246-252 form an RNA binding region; it reads GVGTPKD. Asp265 functions as the Nucleophile in the catalytic mechanism. Zn(2+) contacts are provided by Cys303, Cys305, Cys308, and His334.

This sequence belongs to the queuine tRNA-ribosyltransferase family. In terms of assembly, homodimer. Within each dimer, one monomer is responsible for RNA recognition and catalysis, while the other monomer binds to the replacement base PreQ1. The cofactor is Zn(2+).

It carries out the reaction 7-aminomethyl-7-carbaguanine + guanosine(34) in tRNA = 7-aminomethyl-7-carbaguanosine(34) in tRNA + guanine. The protein operates within tRNA modification; tRNA-queuosine biosynthesis. In terms of biological role, catalyzes the base-exchange of a guanine (G) residue with the queuine precursor 7-aminomethyl-7-deazaguanine (PreQ1) at position 34 (anticodon wobble position) in tRNAs with GU(N) anticodons (tRNA-Asp, -Asn, -His and -Tyr). Catalysis occurs through a double-displacement mechanism. The nucleophile active site attacks the C1' of nucleotide 34 to detach the guanine base from the RNA, forming a covalent enzyme-RNA intermediate. The proton acceptor active site deprotonates the incoming PreQ1, allowing a nucleophilic attack on the C1' of the ribose to form the product. After dissociation, two additional enzymatic reactions on the tRNA convert PreQ1 to queuine (Q), resulting in the hypermodified nucleoside queuosine (7-(((4,5-cis-dihydroxy-2-cyclopenten-1-yl)amino)methyl)-7-deazaguanosine). The chain is Queuine tRNA-ribosyltransferase from Francisella tularensis subsp. mediasiatica (strain FSC147).